Here is a 132-residue protein sequence, read N- to C-terminus: Small ribosomal subunit protein uS8 (132 aa).

The protein belongs to the universal ribosomal protein uS8 family. Part of the 30S ribosomal subunit. Contacts proteins S5 and S12.

One of the primary rRNA binding proteins, it binds directly to 16S rRNA central domain where it helps coordinate assembly of the platform of the 30S subunit. The chain is Small ribosomal subunit protein uS8 from Bacillus cytotoxicus (strain DSM 22905 / CIP 110041 / 391-98 / NVH 391-98).